Reading from the N-terminus, the 400-residue chain is Elongation factor Tu (400 aa).

The region spanning 10-209 (KPHVNVGTIG…AVDSYIPTPE (200 aa)) is the tr-type G domain. A G1 region spans residues 19–26 (GHVDHGKT). 19 to 26 (GHVDHGKT) serves as a coordination point for GTP. Mg(2+) is bound at residue Thr-26. Positions 60–64 (GITIA) are G2. Positions 81 to 84 (DCPG) are G3. GTP contacts are provided by residues 81–85 (DCPGH) and 136–139 (NKVD). The tract at residues 136 to 139 (NKVD) is G4. A G5 region spans residues 174 to 176 (SAL).

The protein belongs to the TRAFAC class translation factor GTPase superfamily. Classic translation factor GTPase family. EF-Tu/EF-1A subfamily. In terms of assembly, monomer.

Its subcellular location is the cytoplasm. The enzyme catalyses GTP + H2O = GDP + phosphate + H(+). Functionally, GTP hydrolase that promotes the GTP-dependent binding of aminoacyl-tRNA to the A-site of ribosomes during protein biosynthesis. This Moorella thermoacetica (strain ATCC 39073 / JCM 9320) protein is Elongation factor Tu.